The following is a 216-amino-acid chain: Probable nicotinate-nucleotide adenylyltransferase (216 aa).

Belongs to the NadD family.

The catalysed reaction is nicotinate beta-D-ribonucleotide + ATP + H(+) = deamido-NAD(+) + diphosphate. It functions in the pathway cofactor biosynthesis; NAD(+) biosynthesis; deamido-NAD(+) from nicotinate D-ribonucleotide: step 1/1. Its function is as follows. Catalyzes the reversible adenylation of nicotinate mononucleotide (NaMN) to nicotinic acid adenine dinucleotide (NaAD). The polypeptide is Probable nicotinate-nucleotide adenylyltransferase (Geobacter metallireducens (strain ATCC 53774 / DSM 7210 / GS-15)).